Reading from the N-terminus, the 493-residue chain is MHNPRLFLSRAGFFSKPGLLPWDTGRPPDLSQSLLGRAYKGSFTSVIAKKHPSRQKYQKKQRHCRDDSWQERLADVVTPLWRLSYEAQLKVKFEAQKKLLQSLESHLKVLHGVSDTVAAHQSEGLRCLLHPIIPSPTTTGYRNKSTFSVYRSPDGNPKTVGYYLGTWKDGNVVCLPCNHLKNIPEKHSQVAQYYEVFLRQSSVEPCLLFHEGGHWRELVVRTNRQGHTMAIVTFHPQGLSEEEVCVQKVTLKDFFTKGPGAICELTSLYFQESTMTRCSHQQSPYQLLFGEPHIFEDLLGLKIRISPDAFFQINTAGAEMLYRIIGELSGVNSESLLLDICCGTGVIGLSVAQRASQVHGIELVEQAVEDARWTAAFNGVTNCEFHAGRAETILPQLLKSQKDEKLTVAVVNPARAGLHYRVVRAIRNCRTIHTLVFVSCKPHGESTRNFIELCCPPNSAKQLLGDPFVLREAVPVDLFPHTPHCELVLLFTR.

The N-terminal 14 residues, Met-1–Phe-14, are a transit peptide targeting the mitochondrion. Residues Gln-312, Glu-362, and Asn-412 each coordinate S-adenosyl-L-methionine. Cys-440 acts as the Nucleophile in catalysis. Glu-486 functions as the Proton acceptor in the catalytic mechanism.

The protein belongs to the class I-like SAM-binding methyltransferase superfamily. RNA M5U methyltransferase family.

It is found in the mitochondrion matrix. The catalysed reaction is uridine(54) in tRNA + S-adenosyl-L-methionine = 5-methyluridine(54) in tRNA + S-adenosyl-L-homocysteine + H(+). The enzyme catalyses a uridine in 12S rRNA + S-adenosyl-L-methionine = a 5-methyluridine in 12S rRNA + S-adenosyl-L-homocysteine + H(+). Functionally, mitochondrial S-adenosyl-L-methionine-dependent methyltransferase that catalyzes the formation of 5-methyl-uridine in tRNAs and 12S rRNA. Catalyzes the methylation of uridine at position 54 (m5U54) in all tRNAs. Specifically methylates the uridine in position 425 of 12S rRNA (m5U425). Does not affect RNA stability or mitochondrial translation. In Mus musculus (Mouse), this protein is tRNA (uracil-5-)-methyltransferase homolog B.